The primary structure comprises 196 residues: Imidazoleglycerol-phosphate dehydratase (196 aa).

Belongs to the imidazoleglycerol-phosphate dehydratase family.

The protein localises to the cytoplasm. The catalysed reaction is D-erythro-1-(imidazol-4-yl)glycerol 3-phosphate = 3-(imidazol-4-yl)-2-oxopropyl phosphate + H2O. It participates in amino-acid biosynthesis; L-histidine biosynthesis; L-histidine from 5-phospho-alpha-D-ribose 1-diphosphate: step 6/9. The protein is Imidazoleglycerol-phosphate dehydratase of Clostridium botulinum (strain Okra / Type B1).